Reading from the N-terminus, the 321-residue chain is Cytochrome f (321 aa).

The first 38 residues, 1-38 (MINLFLLKYKTAFSTFLKPFAYLSLILSVCFYSIQAQA), serve as a signal peptide directing secretion. Residues phenylalanine 39, cysteine 59, cysteine 62, and histidine 63 each coordinate heme. A helical membrane pass occupies residues 287-306 (VKGLIAFFFTVILAQILLVL).

This sequence belongs to the cytochrome f family. As to quaternary structure, the 4 large subunits of the cytochrome b6-f complex are cytochrome b6, subunit IV (17 kDa polypeptide, petD), cytochrome f and the Rieske protein, while the 4 small subunits are PetG, PetL, PetM and PetN. The complex functions as a dimer. Heme serves as cofactor.

Its subcellular location is the plastid. The protein resides in the chloroplast thylakoid membrane. Functionally, component of the cytochrome b6-f complex, which mediates electron transfer between photosystem II (PSII) and photosystem I (PSI), cyclic electron flow around PSI, and state transitions. The sequence is that of Cytochrome f (petA) from Guillardia theta (Cryptophyte).